The following is a 362-amino-acid chain: MLLEFALWLGQDIRAFNVFGYITLRTVMAAMTALLISFACGPAVIRWLAAKKIGQAVRDDGPKSHLTKAGTPTMGGALIIIAIAVTTLLWGDLRNQYVWVTLLVTLGFGAVGWVDDWRKVVHRDPKGLASRWKYLWTSLIALAAALFLGLTANEPAQTELIVPFFKAVSYPLGMLGFVALSYFVINGTSHSVNLTDGLDGLAIMPTVMVAGALAIFAYVAGHAGFSKYLGVPYIAGAGELAVFCGALAGAGLGFLWFNAYPAEVFMGDVGALALGAALGTVAVVVRQEIVLFIMGGLFVAETLSVMVQVLYFKASGGKRIFRMAPLHHHYELGGWKETQVVVRFWIITIMLVLFGLSTLKLR.

10 helical membrane-spanning segments follow: residues 27 to 47, 73 to 93, 97 to 117, 132 to 152, 160 to 180, 200 to 220, 237 to 257, 264 to 284, 289 to 309, and 339 to 359; these read VMAA…VIRW, TMGG…WGDL, YVWV…VDDW, WKYL…GLTA, LIVP…FVAL, GLAI…AYVA, AGEL…FLWF, VFMG…VAVV, IVLF…MVQV, and QVVV…LSTL.

The protein belongs to the glycosyltransferase 4 family. MraY subfamily. Requires Mg(2+) as cofactor.

Its subcellular location is the cell inner membrane. It carries out the reaction UDP-N-acetyl-alpha-D-muramoyl-L-alanyl-gamma-D-glutamyl-meso-2,6-diaminopimeloyl-D-alanyl-D-alanine + di-trans,octa-cis-undecaprenyl phosphate = di-trans,octa-cis-undecaprenyl diphospho-N-acetyl-alpha-D-muramoyl-L-alanyl-D-glutamyl-meso-2,6-diaminopimeloyl-D-alanyl-D-alanine + UMP. The protein operates within cell wall biogenesis; peptidoglycan biosynthesis. Catalyzes the initial step of the lipid cycle reactions in the biosynthesis of the cell wall peptidoglycan: transfers peptidoglycan precursor phospho-MurNAc-pentapeptide from UDP-MurNAc-pentapeptide onto the lipid carrier undecaprenyl phosphate, yielding undecaprenyl-pyrophosphoryl-MurNAc-pentapeptide, known as lipid I. In Aromatoleum aromaticum (strain DSM 19018 / LMG 30748 / EbN1) (Azoarcus sp. (strain EbN1)), this protein is Phospho-N-acetylmuramoyl-pentapeptide-transferase.